Consider the following 442-residue polypeptide: 3-isopropylmalate dehydratase large subunit (442 aa).

3 residues coordinate [4Fe-4S] cluster: Cys-347, Cys-407, and Cys-410.

The protein belongs to the aconitase/IPM isomerase family. LeuC type 1 subfamily. In terms of assembly, heterodimer of LeuC and LeuD. The cofactor is [4Fe-4S] cluster.

The catalysed reaction is (2R,3S)-3-isopropylmalate = (2S)-2-isopropylmalate. It participates in amino-acid biosynthesis; L-leucine biosynthesis; L-leucine from 3-methyl-2-oxobutanoate: step 2/4. Catalyzes the isomerization between 2-isopropylmalate and 3-isopropylmalate, via the formation of 2-isopropylmaleate. This is 3-isopropylmalate dehydratase large subunit from Buchnera aphidicola subsp. Uroleucon solidaginis.